Reading from the N-terminus, the 28-residue chain is Aryl acylamidase (28 aa).

As to quaternary structure, homodimer.

It catalyses the reaction an anilide + H2O = aniline + a carboxylate + H(+). The polypeptide is Aryl acylamidase (Nocardia globerula).